Here is a 359-residue protein sequence, read N- to C-terminus: ATP synthase subunit gamma, chloroplastic (359 aa).

The N-terminal 35 residues, 1–35 (MSCSHLSTAWSSSALASSASTTRRRSPPRSGLLVR), are a transit peptide targeting the chloroplast. The active site involves C124. A disulfide bridge connects residues C234 and C240.

Belongs to the ATPase gamma chain family. As to quaternary structure, F-type ATPases have 2 components, CF(1) - the catalytic core - and CF(0) - the membrane proton channel. CF(1) has five subunits: alpha(3), beta(3), gamma(1), delta(1), epsilon(1). CF(0) has four main subunits: a, b, b' and c.

It localises to the plastid. The protein resides in the chloroplast thylakoid membrane. In terms of biological role, produces ATP from ADP in the presence of a proton gradient across the membrane. The gamma chain is believed to be important in regulating ATPase activity and the flow of protons through the CF(0) complex. Its function is as follows. Inceptin is a proteolytic fragment produced by insect larvae that previously ingested the protein. This peptide mediate plant perception of herbivory through the induction of volatile, phenylpropanoid and protease inhibitor defenses such as ethylene, jasmonic acid and salicylic acid for example. This is ATP synthase subunit gamma, chloroplastic from Zea mays (Maize).